Reading from the N-terminus, the 691-residue chain is Methionine--tRNA ligase (691 aa).

A 'HIGH' region motif is present at residues 12–22 (PYANGSFHIGH). 4 residues coordinate Zn(2+): C143, C146, C156, and C159. Residues 341-345 (KMSKS) carry the 'KMSKS' region motif. K344 is a binding site for ATP. The 107-residue stretch at 585–691 (DFVKVDLRIA…PGAQPGMRIH (107 aa)) folds into the tRNA-binding domain.

Belongs to the class-I aminoacyl-tRNA synthetase family. MetG type 1 subfamily. In terms of assembly, homodimer. Requires Zn(2+) as cofactor.

It localises to the cytoplasm. The enzyme catalyses tRNA(Met) + L-methionine + ATP = L-methionyl-tRNA(Met) + AMP + diphosphate. Is required not only for elongation of protein synthesis but also for the initiation of all mRNA translation through initiator tRNA(fMet) aminoacylation. This chain is Methionine--tRNA ligase, found in Bordetella avium (strain 197N).